The primary structure comprises 424 residues: Glutamyl-tRNA(Gln) amidotransferase subunit D (424 aa).

The disordered stretch occupies residues 56-78 (GETANGSRNGGKGCKTNEEELPE). The region spanning 84–413 (PKIAILSTGG…EKAAGMLRED (330 aa)) is the Asparaginase/glutaminase domain. Residues T94, T170, D171, and K247 contribute to the active site.

Belongs to the asparaginase 1 family. GatD subfamily. As to quaternary structure, heterodimer of GatD and GatE.

The enzyme catalyses L-glutamyl-tRNA(Gln) + L-glutamine + ATP + H2O = L-glutaminyl-tRNA(Gln) + L-glutamate + ADP + phosphate + H(+). Functionally, allows the formation of correctly charged Gln-tRNA(Gln) through the transamidation of misacylated Glu-tRNA(Gln) in organisms which lack glutaminyl-tRNA synthetase. The reaction takes place in the presence of glutamine and ATP through an activated gamma-phospho-Glu-tRNA(Gln). The GatDE system is specific for glutamate and does not act on aspartate. The polypeptide is Glutamyl-tRNA(Gln) amidotransferase subunit D (Methanosarcina acetivorans (strain ATCC 35395 / DSM 2834 / JCM 12185 / C2A)).